A 462-amino-acid polypeptide reads, in one-letter code: Nitrogenase iron-iron protein beta chain (462 aa).

[8Fe-7S] cluster contacts are provided by cysteine 20, cysteine 45, cysteine 104, and serine 143.

This sequence belongs to the NifD/NifK/NifE/NifN family. As to quaternary structure, hexamer of two alpha, two beta, and two delta chains. The cofactor is [8Fe-7S] cluster.

It catalyses the reaction N2 + 8 reduced [2Fe-2S]-[ferredoxin] + 16 ATP + 16 H2O = H2 + 8 oxidized [2Fe-2S]-[ferredoxin] + 2 NH4(+) + 16 ADP + 16 phosphate + 6 H(+). In terms of biological role, this iron-iron protein is part of the nitrogenase complex that catalyzes the key enzymatic reactions in nitrogen fixation. Other nitrogenase complexes utilize a molybdenum-iron protein or a vanadium-iron protein. The polypeptide is Nitrogenase iron-iron protein beta chain (anfK) (Azotobacter vinelandii).